The sequence spans 361 residues: Phosphoserine aminotransferase (361 aa).

Residue Arg-43 coordinates L-glutamate. Residues Trp-103, Thr-153, Asp-173, and Gln-196 each contribute to the pyridoxal 5'-phosphate site. At Lys-197 the chain carries N6-(pyridoxal phosphate)lysine. Residue 238-239 participates in pyridoxal 5'-phosphate binding; sequence NT.

The protein belongs to the class-V pyridoxal-phosphate-dependent aminotransferase family. SerC subfamily. Homodimer. The cofactor is pyridoxal 5'-phosphate.

The protein localises to the cytoplasm. The enzyme catalyses O-phospho-L-serine + 2-oxoglutarate = 3-phosphooxypyruvate + L-glutamate. It catalyses the reaction 4-(phosphooxy)-L-threonine + 2-oxoglutarate = (R)-3-hydroxy-2-oxo-4-phosphooxybutanoate + L-glutamate. It participates in amino-acid biosynthesis; L-serine biosynthesis; L-serine from 3-phospho-D-glycerate: step 2/3. It functions in the pathway cofactor biosynthesis; pyridoxine 5'-phosphate biosynthesis; pyridoxine 5'-phosphate from D-erythrose 4-phosphate: step 3/5. Catalyzes the reversible conversion of 3-phosphohydroxypyruvate to phosphoserine and of 3-hydroxy-2-oxo-4-phosphonooxybutanoate to phosphohydroxythreonine. The chain is Phosphoserine aminotransferase from Hahella chejuensis (strain KCTC 2396).